The primary structure comprises 62 residues: Photosystem II reaction center protein Z (62 aa).

The next 2 helical transmembrane spans lie at 8-28 and 41-61; these read AVFALIITSSILLISVPVVFA and FSGTSLWIGLVFLVGILNSLI.

This sequence belongs to the PsbZ family. As to quaternary structure, PSII is composed of 1 copy each of membrane proteins PsbA, PsbB, PsbC, PsbD, PsbE, PsbF, PsbH, PsbI, PsbJ, PsbK, PsbL, PsbM, PsbT, PsbY, PsbZ, Psb30/Ycf12, at least 3 peripheral proteins of the oxygen-evolving complex and a large number of cofactors. It forms dimeric complexes.

The protein resides in the plastid. The protein localises to the chloroplast thylakoid membrane. In terms of biological role, may control the interaction of photosystem II (PSII) cores with the light-harvesting antenna, regulates electron flow through the 2 photosystem reaction centers. PSII is a light-driven water plastoquinone oxidoreductase, using light energy to abstract electrons from H(2)O, generating a proton gradient subsequently used for ATP formation. The polypeptide is Photosystem II reaction center protein Z (Arabidopsis thaliana (Mouse-ear cress)).